The following is a 1142-amino-acid chain: MFIVHRRFFQNEKAFTPAGKHEKVADGNKHETLATSEYPKVCASNDLYKILQISAPKVGNFTIHDAPVVGLIDSILEYYLYISVKVRKAWIAGYGSQPQNLICFDWERFTGILDQQSLNSPPLAGFVKPDPTSAEPGFLLLWPASGDLFYWERTSLMNVEVSAPEFPGFLHYRIQLKRYESCKNLVSAEPAGFFLTLSSGRLLHLNLKDSDGNSSIQVRILFPGLHIPNCLLSLYNSIFAFTSGRVIPIRCGSIKGPGERLVYSMHSGSTLRIWEIFGTGDHHLLRGFDIYDIILDSIQESFSYVNRFLILDFSVSTSDPYTLACLVSWRDNASLFNYAAIIISFNHQMIPHVSQFCHVRSYLSAILPSVCRIFLPSPGTVVFCVFDVTFAMFHKVRGKEGTFYVEENLVVNNLTSKSRVLDFGMEDAIYEKSTHTLLKTPALILLTEGHGIIRIESSASYLKTSFSATTYLRSRLSQFASQSPLFREQFLLNFDFTYNLSESEVYNTVFNLCDELYTTPCKKNMSVLETLHSQQRDLMEIVLVAFKYLHLSPSNRLQLWLKVAYCSALADLYELLMCNEKMSNLLRRVLKIMSSNDNIDELFLKKCLNINLLLQHLSSEYSQISGQDASNAQKRIEVIVNVNNVYGTIFGNELAYRQEKISKFTDPSSVIRSDLWTVEVDHLDLLRKQIEDSISLHRDVRDSKDAHILKVSNKLRKQILHLVEQNCLLIFDLHNGTDDTIVKSHNFQKFEEEFGNSRKEWLQYLASVGYLEKAIDLAEKVKDFQTMVILLDCLDPKDPTIKLQKQKACLNKYKEEFADVIFFYLVDTEQYASLLHDFLEYQSLLISFFEANDLLNLLWIFEAQNGNYGRASEILFRDCEPEENRIIGKISQLALAKLYSWTNRIEGENIILSNETEVIENHLAILLIQEQYAEMLSSLVDITEDEGEAVEAIVTSNCVNLSENSIRAWLVSSAVERLIQNEYTTLCEMVDFFSSFSLRECSFKEVDLALELLERATITKDVYFYLKDLVYRRFLLQVNWAEIIDAHEDLESSFFPMVKEIMLESDFLIWLQHMEHNIHDESKHYLKSEKNFLQSVYSSLSESQVEDYQMELFREKQIFSVLCKDRELYILIPKLLDVATKQ.

It belongs to the nucleoporin Nup133 family. As to quaternary structure, component of the npc107-120 complex which consists of nup85, nup107, nup120, nup131, nup132 and seh1. Interacts with nup107.

It is found in the nucleus. Its function is as follows. Functions as a component of the nuclear pore complex (NPC). NPC components, collectively referred to as nucleoporins (NUPs), can play the role of both NPC structural components and of docking or interaction partners for transiently associated nuclear transport factors. Active directional transport is assured by both, a Phe-Gly (FG) repeat affinity gradient for these transport factors across the NPC and a transport cofactor concentration gradient across the nuclear envelope. This is Nucleoporin nup131 (nup131) from Schizosaccharomyces pombe (strain 972 / ATCC 24843) (Fission yeast).